The following is a 246-amino-acid chain: Apolipoprotein L domain-containing protein 1 (246 aa).

Helical transmembrane passes span S50–L72 and G89–F109. Positions L193 to S220 form a coiled coil.

The protein belongs to the apolipoprotein L family. As to expression, present at low levels in brain vascular cells (at protein level).

It localises to the cell membrane. It is found in the cell junction. The protein localises to the cytoplasmic vesicle. Its subcellular location is the secretory vesicle. Its function is as follows. Is a modulator of endothelial barrier permeability, required for proper organization of endothelial cell-cell junctions and cytoskeleton. It also plays a role in the modulation of secretory autophagy. May affect blood-brain barrier permeability. The polypeptide is Apolipoprotein L domain-containing protein 1 (Apold1) (Rattus norvegicus (Rat)).